A 159-amino-acid chain; its full sequence is SsrA-binding protein (159 aa).

The tract at residues 137–159 (DKRETEKQRDWSREKGRLLKERG) is disordered.

This sequence belongs to the SmpB family.

It localises to the cytoplasm. Its function is as follows. Required for rescue of stalled ribosomes mediated by trans-translation. Binds to transfer-messenger RNA (tmRNA), required for stable association of tmRNA with ribosomes. tmRNA and SmpB together mimic tRNA shape, replacing the anticodon stem-loop with SmpB. tmRNA is encoded by the ssrA gene; the 2 termini fold to resemble tRNA(Ala) and it encodes a 'tag peptide', a short internal open reading frame. During trans-translation Ala-aminoacylated tmRNA acts like a tRNA, entering the A-site of stalled ribosomes, displacing the stalled mRNA. The ribosome then switches to translate the ORF on the tmRNA; the nascent peptide is terminated with the 'tag peptide' encoded by the tmRNA and targeted for degradation. The ribosome is freed to recommence translation, which seems to be the essential function of trans-translation. The chain is SsrA-binding protein from Mesorhizobium japonicum (strain LMG 29417 / CECT 9101 / MAFF 303099) (Mesorhizobium loti (strain MAFF 303099)).